The primary structure comprises 87 residues: U1-theraphotoxin-Ct1a (87 aa).

A signal peptide spans 1 to 23; the sequence is MKTFTLIAILTCAVLVIFHAAAA. Residues 24–48 constitute a propeptide that is removed on maturation; sequence EELEVQDVIQPEDTLTGLATLDEDR.

This sequence belongs to the neurotoxin 12 (Hwtx-2) family. 03 (juruin) subfamily. In terms of processing, contains 3 disulfide bonds. Two different connectivities are observed in similar proteins (C1-C3, C2-C5, C4-C6 or C1-C4, C2-C5, C3-C6). In terms of tissue distribution, expressed by the venom gland.

The protein resides in the secreted. Functionally, this toxin causes paralysis and death to sheep blowflies. It may inhibit voltage-gated calcium channels. The protein is U1-theraphotoxin-Ct1a of Coremiocnemis tropix (Australian tarantula spider).